Here is a 387-residue protein sequence, read N- to C-terminus: MRPAYDDPRTTDQPITRARPPPRAARGRRLGEEPLTEHLVDPDVPRDLHAFIAGLPKAELHVHHVGSASPRIVSELAARHADSKVPTDPEALVDYFTFTDFAHFIDVYLSVVDLIRTPEDVRLLTYEVARDMARQQVRYAELTITPFSSTRRGIDEGAFMDAIEDARKAAEAEFGTVLRWCFDIPGEAGLESAEETARLATDDRLRPEGLVSFGLGGPEIGVARPQFKPYFDRAIAAGLHSVPHAGETTGPQTVWEALIDLRAERIGHGTSSAQDPKLLAHLAERRIPLEVCPTSNIATRAVRTLDEHPIKEFVRAGVPVTINSDDPPMFGTDLNNEYAVAARLLGLDERGLADLAKNGVEASFLDAPGKARIADEIDTYTAAWLAS.

The span at 1-10 (MRPAYDDPRT) shows a compositional bias: basic and acidic residues. The interval 1-37 (MRPAYDDPRTTDQPITRARPPPRAARGRRLGEEPLTE) is disordered. Residues H61 and H63 each contribute to the Zn(2+) site. Residues R116, D183, and G217 each contribute to the substrate site. Zn(2+) is bound at residue H244. E247 (proton donor) is an active-site residue. D325 is a binding site for Zn(2+).

Belongs to the metallo-dependent hydrolases superfamily. Adenosine and AMP deaminases family. Requires Zn(2+) as cofactor.

The catalysed reaction is 6-amino-6-deoxyfutalosine + H2O + H(+) = futalosine + NH4(+). It functions in the pathway quinol/quinone metabolism; menaquinone biosynthesis. Its function is as follows. Catalyzes the deamination of aminodeoxyfutalosine (AFL) into futalosine (FL), a step in the biosynthesis of menaquinone (MK, vitamin K2). This Streptomyces coelicolor (strain ATCC BAA-471 / A3(2) / M145) protein is Aminodeoxyfutalosine deaminase.